A 247-amino-acid chain; its full sequence is Dof zinc finger protein DOF3.5 (247 aa).

Residues 25–79 (PSCPRCGSSNTKFCYYNNYSLTQPRYFCKGCRRYWTKGGSLRNVPVGGGCRKSRR) form a Dof-type zinc finger. Zn(2+) contacts are provided by C27, C30, C52, and C55. The tract at residues 70 to 100 (VGGGCRKSRRPKSSSGNNTKTSLTANSGNPG) is disordered. The segment covering 82–94 (SSSGNNTKTSLTA) has biased composition (polar residues).

It localises to the nucleus. Functionally, transcription factor that binds specifically to a 5'-AA[AG]G-3' consensus core sequence. This chain is Dof zinc finger protein DOF3.5 (DOF3.5), found in Arabidopsis thaliana (Mouse-ear cress).